The primary structure comprises 326 residues: MLTLARQQQRQNIRWLLCLSVLMLLALLLSLCAGEQWISPGDWFTPRGELFVWQIRLPRTLAVLLVGAALAISGAVMQALFENPLAEPGLLGVSNGAGVGLIAAVLLGQGQLPNWALGLCAIAGALIITLILLRFARRHLSTSRLLLAGVALGIICSALMTWAIYFSTSVDLRQLMYWMMGGFGGVDWRQSWLMLALIPVLLWICCQSRPMNMLALGEISARQLGLPLWFWRNVLVAATGWMVGVSVALAGAIGFIGLVIPHILRLCGLTDHRVLLPGCALAGASALLLADIVARLALAAAELPIGVVTATLGAPVFIWLLLKARR.

Helical transmembrane passes span 15-35, 61-81, 88-108, 112-132, 146-166, 184-204, 240-260, 274-294, and 302-322; these read WLLC…CAGE, LAVL…QALF, PGLL…VLLG, LPNW…TLIL, LLAG…AIYF, GGVD…LLWI, GWMV…GLVI, VLLP…DIVA, and ELPI…WLLL.

This sequence belongs to the binding-protein-dependent transport system permease family. FecCD subfamily. The complex is composed of two ATP-binding proteins (BtuD), two transmembrane proteins (BtuC) and a solute-binding protein (BtuF).

It is found in the cell inner membrane. Its function is as follows. Part of the ABC transporter complex BtuCDF involved in vitamin B12 import. Involved in the translocation of the substrate across the membrane. This is Vitamin B12 import system permease protein BtuC from Escherichia coli O9:H4 (strain HS).